The primary structure comprises 419 residues: Endothiapepsin (419 aa).

Residues 1–20 form the signal peptide; sequence MSSPLKNALVTAMLAGGALS. A propeptide spans 21 to 89 (activation peptide); that stretch reads SPTKQHVGIP…QNSTSGLAER (69 aa). The Peptidase A1 domain occupies 106–417; it reads YITPVQIGTP…GATTPTLGFA (312 aa). Catalysis depends on residues aspartate 124 and serine 288. Cysteine 344 and cysteine 379 are disulfide-bonded.

The protein belongs to the peptidase A1 family.

It catalyses the reaction Hydrolysis of proteins with specificity similar to that of pepsin A, prefers hydrophobic residues at P1 and P1', but does not cleave 14-Ala-|-Leu-15 in the B chain of insulin or Z-Glu-Tyr. Clots milk.. The sequence is that of Endothiapepsin (EAPA) from Cryphonectria parasitica (Chestnut blight fungus).